The primary structure comprises 74 residues: MKLLLKNINELAAKQKSEGLTAFEKERQAALRQEYLKKIRGTVQDNLHHVTIIDPLGDDVTPKKLKEIQAELRG.

The protein belongs to the UPF0291 family.

The protein localises to the cytoplasm. This chain is UPF0291 protein lmo0496, found in Listeria monocytogenes serovar 1/2a (strain ATCC BAA-679 / EGD-e).